Reading from the N-terminus, the 270-residue chain is Phosphoribosylformylglycinamidine synthase subunit PurQ (270 aa).

Positions 5 to 251 (ALVLHATGTN…VIRERDSEEE (247 aa)) constitute a Glutamine amidotransferase type-1 domain. Cysteine 95 (nucleophile) is an active-site residue. Residues histidine 236 and glutamate 238 contribute to the active site.

In terms of assembly, part of the FGAM synthase complex composed of 1 PurL, 1 PurQ and 2 PurS subunits.

The protein resides in the cytoplasm. The catalysed reaction is N(2)-formyl-N(1)-(5-phospho-beta-D-ribosyl)glycinamide + L-glutamine + ATP + H2O = 2-formamido-N(1)-(5-O-phospho-beta-D-ribosyl)acetamidine + L-glutamate + ADP + phosphate + H(+). It carries out the reaction L-glutamine + H2O = L-glutamate + NH4(+). It functions in the pathway purine metabolism; IMP biosynthesis via de novo pathway; 5-amino-1-(5-phospho-D-ribosyl)imidazole from N(2)-formyl-N(1)-(5-phospho-D-ribosyl)glycinamide: step 1/2. Functionally, part of the phosphoribosylformylglycinamidine synthase complex involved in the purines biosynthetic pathway. Catalyzes the ATP-dependent conversion of formylglycinamide ribonucleotide (FGAR) and glutamine to yield formylglycinamidine ribonucleotide (FGAM) and glutamate. The FGAM synthase complex is composed of three subunits. PurQ produces an ammonia molecule by converting glutamine to glutamate. PurL transfers the ammonia molecule to FGAR to form FGAM in an ATP-dependent manner. PurS interacts with PurQ and PurL and is thought to assist in the transfer of the ammonia molecule from PurQ to PurL. The polypeptide is Phosphoribosylformylglycinamidine synthase subunit PurQ (Treponema denticola (strain ATCC 35405 / DSM 14222 / CIP 103919 / JCM 8153 / KCTC 15104)).